Reading from the N-terminus, the 219-residue chain is 3-dehydroquinate dehydratase (219 aa).

3-dehydroquinate is bound by residues Ser10, 29 to 31, and Arg59; that span reads EVR. His116 functions as the Proton donor/acceptor in the catalytic mechanism. Lys142 functions as the Schiff-base intermediate with substrate in the catalytic mechanism. 3-dehydroquinate-binding residues include Arg180 and Gln203.

Belongs to the type-I 3-dehydroquinase family. In terms of assembly, homodimer.

The catalysed reaction is 3-dehydroquinate = 3-dehydroshikimate + H2O. It functions in the pathway metabolic intermediate biosynthesis; chorismate biosynthesis; chorismate from D-erythrose 4-phosphate and phosphoenolpyruvate: step 3/7. Involved in the third step of the chorismate pathway, which leads to the biosynthesis of aromatic amino acids. Catalyzes the cis-dehydration of 3-dehydroquinate (DHQ) and introduces the first double bond of the aromatic ring to yield 3-dehydroshikimate. This Methanocella arvoryzae (strain DSM 22066 / NBRC 105507 / MRE50) protein is 3-dehydroquinate dehydratase.